The primary structure comprises 232 residues: Ribonuclease 3 (232 aa).

The RNase III domain maps to 10–135; that stretch reads ALKIYEATGY…LIGAMYMDGG (126 aa). Glu48 is a binding site for Mg(2+). Residue Asp52 is part of the active site. 2 residues coordinate Mg(2+): Asn121 and Glu124. The active site involves Glu124. The region spanning 161 to 230 is the DRBM domain; that stretch reads DPKTALQEWV…AKLMLKKITE (70 aa).

The protein belongs to the ribonuclease III family. In terms of assembly, homodimer. Mg(2+) is required as a cofactor.

It is found in the cytoplasm. The enzyme catalyses Endonucleolytic cleavage to 5'-phosphomonoester.. Its function is as follows. Digests double-stranded RNA. Involved in the processing of primary rRNA transcript to yield the immediate precursors to the large and small rRNAs (23S and 16S). Processes some mRNAs, and tRNAs when they are encoded in the rRNA operon. Processes pre-crRNA and tracrRNA of type II CRISPR loci if present in the organism. The chain is Ribonuclease 3 from Anaplasma marginale (strain Florida).